The following is a 611-amino-acid chain: Polyphenol oxidase 4 (611 aa).

Residues H57, H82, H91, H251, H255, and H283 each coordinate Cu cation. Positions 80 to 82 (CTH) form a cross-link, 2'-(S-cysteinyl)-histidine (Cys-His). H255 provides a ligand contact to substrate. Positions 380–611 (IKKSEGGKNP…GGLGALGRIF (232 aa)) are cleaved as a propeptide — removed in mature form.

The protein belongs to the tyrosinase family. In terms of assembly, heterotetramer. Cu(2+) serves as cofactor. Post-translationally, the C-ter is probably cleaved after Gly-379 since the mature active protein is smaller than the protein encoded by the gene.

The catalysed reaction is 2 L-dopa + O2 = 2 L-dopaquinone + 2 H2O. The enzyme catalyses L-tyrosine + O2 = L-dopaquinone + H2O. Its function is as follows. Copper-containing oxidase that catalyzes both the o-hydroxylation of monophenols and the subsequent oxidation of the resulting o-diphenols into reactive o-quinones, which evolve spontaneously to produce intermediates, which associate in dark brown pigments. Involved in the initial step of melanin synthesis. Melanins constitute a mechanism of defense and resistance to stress such as UV radiations, free radicals, gamma rays, dehydratation and extreme temperatures, and contribute to the fungal cell-wall resistance against hydrolytic enzymes in avoiding cellular lysis. Fungal pigments are also involved in the formation and stability of spores. This chain is Polyphenol oxidase 4 (PPO4), found in Agaricus bisporus (White button mushroom).